Consider the following 359-residue polypeptide: NADH-quinone oxidoreductase subunit H (359 aa).

Helical transmembrane passes span 19–39, 94–114, 127–147, 175–195, 202–222, 255–275, 301–321, and 337–357; these read IGWF…FIAL, FLFV…FAVL, VGLF…LAAG, IALL…IILM, FLHW…IYFI, FAVI…IISI, VWGA…QMWL, and CWKV…IWVI.

Belongs to the complex I subunit 1 family. As to quaternary structure, NDH-1 is composed of 14 different subunits. Subunits NuoA, H, J, K, L, M, N constitute the membrane sector of the complex.

Its subcellular location is the cell inner membrane. It carries out the reaction a quinone + NADH + 5 H(+)(in) = a quinol + NAD(+) + 4 H(+)(out). NDH-1 shuttles electrons from NADH, via FMN and iron-sulfur (Fe-S) centers, to quinones in the respiratory chain. The immediate electron acceptor for the enzyme in this species is believed to be ubiquinone. Couples the redox reaction to proton translocation (for every two electrons transferred, four hydrogen ions are translocated across the cytoplasmic membrane), and thus conserves the redox energy in a proton gradient. This subunit may bind ubiquinone. This Chlorobaculum tepidum (strain ATCC 49652 / DSM 12025 / NBRC 103806 / TLS) (Chlorobium tepidum) protein is NADH-quinone oxidoreductase subunit H.